Consider the following 481-residue polypeptide: Glutamate--tRNA ligase 2 (481 aa).

Residues 17–27 (PSPTGFLHIGG) carry the 'HIGH' region motif. Over residues 118 to 139 (AEQRAKKQPQRYDGRWRDRDPS) the composition is skewed to basic and acidic residues. A disordered region spans residues 118-143 (AEQRAKKQPQRYDGRWRDRDPSEAPA). Residues 246–250 (KLSKR) carry the 'KMSKS' region motif. Lys-249 provides a ligand contact to ATP.

Belongs to the class-I aminoacyl-tRNA synthetase family. Glutamate--tRNA ligase type 1 subfamily. As to quaternary structure, monomer.

Its subcellular location is the cytoplasm. The enzyme catalyses tRNA(Glu) + L-glutamate + ATP = L-glutamyl-tRNA(Glu) + AMP + diphosphate. Catalyzes the attachment of glutamate to tRNA(Glu) in a two-step reaction: glutamate is first activated by ATP to form Glu-AMP and then transferred to the acceptor end of tRNA(Glu). The polypeptide is Glutamate--tRNA ligase 2 (Zymomonas mobilis subsp. mobilis (strain ATCC 31821 / ZM4 / CP4)).